The sequence spans 258 residues: Tropinone reductase-like 3 (258 aa).

Ile-19–Val-43 is a binding site for NAD(+). Ser-150 provides a ligand contact to substrate. Catalysis depends on Tyr-163, which acts as the Proton acceptor.

Belongs to the short-chain dehydrogenases/reductases (SDR) family.

Functionally, has no tropinone reductase activity. This chain is Tropinone reductase-like 3, found in Erythroxylum coca (Coca plant).